Consider the following 181-residue polypeptide: Probable chemoreceptor glutamine deamidase CheD (181 aa).

The protein belongs to the CheD family.

It carries out the reaction L-glutaminyl-[protein] + H2O = L-glutamyl-[protein] + NH4(+). Functionally, probably deamidates glutamine residues to glutamate on methyl-accepting chemotaxis receptors (MCPs), playing an important role in chemotaxis. This chain is Probable chemoreceptor glutamine deamidase CheD, found in Agrobacterium fabrum (strain C58 / ATCC 33970) (Agrobacterium tumefaciens (strain C58)).